We begin with the raw amino-acid sequence, 577 residues long: Sulfite reductase [NADPH] hemoprotein beta-component 2 (577 aa).

Residues cysteine 441, cysteine 447, cysteine 486, and cysteine 490 each contribute to the [4Fe-4S] cluster site. Position 490 (cysteine 490) interacts with siroheme.

It belongs to the nitrite and sulfite reductase 4Fe-4S domain family. Alpha(8)-beta(8). The alpha component is a flavoprotein, the beta component is a hemoprotein. Siroheme is required as a cofactor. Requires [4Fe-4S] cluster as cofactor.

The enzyme catalyses hydrogen sulfide + 3 NADP(+) + 3 H2O = sulfite + 3 NADPH + 4 H(+). It functions in the pathway sulfur metabolism; hydrogen sulfide biosynthesis; hydrogen sulfide from sulfite (NADPH route): step 1/1. In terms of biological role, component of the sulfite reductase complex that catalyzes the 6-electron reduction of sulfite to sulfide. This is one of several activities required for the biosynthesis of L-cysteine from sulfate. In Pectobacterium carotovorum subsp. carotovorum (strain PC1), this protein is Sulfite reductase [NADPH] hemoprotein beta-component 2.